A 598-amino-acid chain; its full sequence is Aspartate--tRNA ligase (598 aa).

Residue E175 participates in L-aspartate binding. The tract at residues 199–202 (QLFK) is aspartate. R221 provides a ligand contact to L-aspartate. ATP contacts are provided by residues 221 to 223 (RDE) and Q230. H450 serves as a coordination point for L-aspartate. E486 is a binding site for ATP. L-aspartate is bound at residue R493. 538–541 (GLDR) provides a ligand contact to ATP.

Belongs to the class-II aminoacyl-tRNA synthetase family. Type 1 subfamily. As to quaternary structure, homodimer.

The protein resides in the cytoplasm. It catalyses the reaction tRNA(Asp) + L-aspartate + ATP = L-aspartyl-tRNA(Asp) + AMP + diphosphate. Catalyzes the attachment of L-aspartate to tRNA(Asp) in a two-step reaction: L-aspartate is first activated by ATP to form Asp-AMP and then transferred to the acceptor end of tRNA(Asp). The sequence is that of Aspartate--tRNA ligase from Lactiplantibacillus plantarum (strain ATCC BAA-793 / NCIMB 8826 / WCFS1) (Lactobacillus plantarum).